A 301-amino-acid polypeptide reads, in one-letter code: GTPase Era (301 aa).

One can recognise an Era-type G domain in the interval Lys6–Ile173. A G1 region spans residues Gly14–Ser21. Gly14–Ser21 is a GTP binding site. Positions Gln40–Asn44 are G2. The tract at residues Asp61 to Gly64 is G3. GTP contacts are provided by residues Asp61–Ile65 and Asn123–Asp126. The interval Asn123–Asp126 is G4. The segment at Ile152–Ala154 is G5. Positions Thr204–Lys282 constitute a KH type-2 domain.

It belongs to the TRAFAC class TrmE-Era-EngA-EngB-Septin-like GTPase superfamily. Era GTPase family. Monomer.

The protein localises to the cytoplasm. Its subcellular location is the cell membrane. Functionally, an essential GTPase that binds both GDP and GTP, with rapid nucleotide exchange. Plays a role in 16S rRNA processing and 30S ribosomal subunit biogenesis and possibly also in cell cycle regulation and energy metabolism. The sequence is that of GTPase Era from Listeria innocua serovar 6a (strain ATCC BAA-680 / CLIP 11262).